The following is a 232-amino-acid chain: Large ribosomal subunit protein uL1 (232 aa).

The protein belongs to the universal ribosomal protein uL1 family. In terms of assembly, part of the 50S ribosomal subunit.

Its function is as follows. Binds directly to 23S rRNA. The L1 stalk is quite mobile in the ribosome, and is involved in E site tRNA release. Functionally, protein L1 is also a translational repressor protein, it controls the translation of the L11 operon by binding to its mRNA. The sequence is that of Large ribosomal subunit protein uL1 from Chlamydia pneumoniae (Chlamydophila pneumoniae).